Consider the following 280-residue polypeptide: Transmembrane protein 119 (280 aa).

Positions 1-20 are cleaved as a signal peptide; that stretch reads MVPWFLLSLLLLARPVPGVA. Residues 21–91 lie on the Extracellular side of the membrane; the sequence is YSVSLPASFL…IMDFFRQYVM (71 aa). O-linked (Xyl...) (chondroitin sulfate) serine glycosylation is present at S36. The segment covering 38–47 has biased composition (low complexity); sequence EAEGSSASSP. Residues 38-73 are disordered; it reads EAEGSSASSPSLPPPGTPAFSPTPERPQPTALDGPV. Residues 92-112 traverse the membrane as a helical segment; sequence LIAVVGSLTFLIMFIVCAALI. Residues 113–280 are Cytoplasmic-facing; it reads TRQKHKATAY…CACNRVSPSV (168 aa). Disordered stretches follow at residues 133 to 162 and 181 to 280; these read VDQRDRAGGPRTFSEVPDRAPDSRHEEGLD and PARA…SPSV. A compositionally biased stretch (basic and acidic residues) spans 148–162; the sequence is VPDRAPDSRHEEGLD. S269 is modified (phosphoserine).

In terms of assembly, interacts with SMAD1, SMAD5 and RUNX2. Expressed in spermatocytes and spermatids in the developing testis (at protein level). Expressed in the brain, heart, lung, spleen, skeletal muscle, ovary, testis and epididymis. Predominantly expressed in osteoblasts.

It localises to the cell membrane. The protein resides in the cytoplasm. Its subcellular location is the endoplasmic reticulum membrane. It is found in the secreted. Its function is as follows. Plays an important role in bone formation and normal bone mineralization. Promotes the differentiation of myoblasts into osteoblasts. May induce the commitment and differentiation of myoblasts into osteoblasts through an enhancement of BMP2 production and interaction with the BMP-RUNX2 pathway. Up-regulates the expression of ATF4 which plays a central role in osteoblast differentiation. Essential for normal spermatogenesis and late testicular differentiation. The chain is Transmembrane protein 119 (Tmem119) from Mus musculus (Mouse).